The sequence spans 173 residues: Alpha-crystallin A chain (173 aa).

At methionine 1 the chain carries N-acetylmethionine. Residues 52-162 (LFRGFMDSGI…SHSERPIPVS (111 aa)) form the sHSP domain. Zn(2+) contacts are provided by histidine 100, glutamate 102, histidine 107, and histidine 154. The interval 146–173 (MMSGLDSSHSERPIPVSREEKPTSAPSS) is disordered. A compositionally biased stretch (basic and acidic residues) spans 153-167 (SHSERPIPVSREEKP).

This sequence belongs to the small heat shock protein (HSP20) family. Heteropolymer composed of three CRYAA and one CRYAB subunits. Inter-subunit bridging via zinc ions enhances stability, which is crucial as there is no protein turn over in the lens. Can also form homodimers and homotetramers (dimers of dimers) which serve as the building blocks of homooligomers. Within homooligomers, the zinc-binding motif is created from residues of 3 different molecules. His-100 and Glu-102 from one molecule are ligands of the zinc ion, and His-107 and His-154 residues from additional molecules complete the site with tetrahedral coordination geometry.

The protein localises to the cytoplasm. It localises to the nucleus. Its function is as follows. Contributes to the transparency and refractive index of the lens. May act as a chaperone, preventing aggregation of various proteins under a wide range of stress conditions. This Aquarana catesbeiana (American bullfrog) protein is Alpha-crystallin A chain (CRYAA).